An 86-amino-acid polypeptide reads, in one-letter code: Cell division topological specificity factor (86 aa).

The protein belongs to the MinE family.

In terms of biological role, prevents the cell division inhibition by proteins MinC and MinD at internal division sites while permitting inhibition at polar sites. This ensures cell division at the proper site by restricting the formation of a division septum at the midpoint of the long axis of the cell. The protein is Cell division topological specificity factor of Shewanella woodyi (strain ATCC 51908 / MS32).